Here is a 42-residue protein sequence, read N- to C-terminus: Photosystem I reaction center subunit IX (42 aa).

The helical transmembrane segment at 7-27 (YLSTAPVLATLWFGFLAGLLI) threads the bilayer.

The protein belongs to the PsaJ family.

The protein localises to the plastid. Its subcellular location is the chloroplast thylakoid membrane. May help in the organization of the PsaE and PsaF subunits. The protein is Photosystem I reaction center subunit IX of Anthoceros angustus (Hornwort).